The following is a 124-amino-acid chain: Glycine cleavage system H protein (124 aa).

Positions 22–104 (LVITGITDHA…YGKGWIYKIK (83 aa)) constitute a Lipoyl-binding domain. Position 63 is an N6-lipoyllysine (Lys63).

This sequence belongs to the GcvH family. In terms of assembly, the glycine cleavage system is composed of four proteins: P, T, L and H. Requires (R)-lipoate as cofactor.

The glycine cleavage system catalyzes the degradation of glycine. The H protein shuttles the methylamine group of glycine from the P protein to the T protein. The sequence is that of Glycine cleavage system H protein from Acinetobacter baumannii (strain ACICU).